A 243-amino-acid polypeptide reads, in one-letter code: Ribosomal RNA small subunit methyltransferase J (243 aa).

Residues 112–113 and Asp-164 each bind S-adenosyl-L-methionine; that span reads ER.

Belongs to the methyltransferase superfamily. RsmJ family.

Its subcellular location is the cytoplasm. The enzyme catalyses guanosine(1516) in 16S rRNA + S-adenosyl-L-methionine = N(2)-methylguanosine(1516) in 16S rRNA + S-adenosyl-L-homocysteine + H(+). Its function is as follows. Specifically methylates the guanosine in position 1516 of 16S rRNA. The sequence is that of Ribosomal RNA small subunit methyltransferase J from Legionella pneumophila subsp. pneumophila (strain Philadelphia 1 / ATCC 33152 / DSM 7513).